The chain runs to 38 residues: Large ribosomal subunit protein bL36A (38 aa).

The protein belongs to the bacterial ribosomal protein bL36 family.

This chain is Large ribosomal subunit protein bL36A, found in Cronobacter sakazakii (strain ATCC BAA-894) (Enterobacter sakazakii).